A 220-amino-acid polypeptide reads, in one-letter code: LOB domain-containing protein 31 (220 aa).

Positions 10–112 constitute an LOB domain; it reads GPCGACKFLR…AELAYVQTQL (103 aa). The tract at residues 117–172 is disordered; that stretch reads GLPPPNSQNNSRTEAASSSNVPLISSVDSKDNMSSSSSHIPCMSQQQEQEQPKEAI. The span at 123–139 shows a compositional bias: polar residues; the sequence is SQNNSRTEAASSSNVPL.

The protein belongs to the LOB domain-containing protein family. Expressed in roots, stems and flowers.

This is LOB domain-containing protein 31 (LBD31) from Arabidopsis thaliana (Mouse-ear cress).